Here is a 221-residue protein sequence, read N- to C-terminus: Urease accessory protein UreG (221 aa).

19 to 26 lines the GTP pocket; sequence GPVGSGKT.

It belongs to the SIMIBI class G3E GTPase family. UreG subfamily. As to quaternary structure, homodimer. UreD, UreF and UreG form a complex that acts as a GTP-hydrolysis-dependent molecular chaperone, activating the urease apoprotein by helping to assemble the nickel containing metallocenter of UreC. The UreE protein probably delivers the nickel.

The protein localises to the cytoplasm. Functionally, facilitates the functional incorporation of the urease nickel metallocenter. This process requires GTP hydrolysis, probably effectuated by UreG. In terms of biological role, expression of the urease operon increases the likelihood of bacterial survival by contributing to acid resistance in vitro and in vivo in BALB/c mice. Y.enterocolitica enters the body via an oral path and must survive the acidic stomach before being able to colonize the intestinal mucosa. This is Urease accessory protein UreG from Yersinia enterocolitica.